The following is a 316-amino-acid chain: 4-hydroxy-3-methylbut-2-enyl diphosphate reductase (316 aa).

C12 lines the [4Fe-4S] cluster pocket. 2 residues coordinate (2E)-4-hydroxy-3-methylbut-2-enyl diphosphate: H41 and H74. The dimethylallyl diphosphate site is built by H41 and H74. H41 and H74 together coordinate isopentenyl diphosphate. A [4Fe-4S] cluster-binding site is contributed by C96. H124 is a binding site for (2E)-4-hydroxy-3-methylbut-2-enyl diphosphate. H124 is a dimethylallyl diphosphate binding site. H124 is a binding site for isopentenyl diphosphate. E126 functions as the Proton donor in the catalytic mechanism. Residue T168 participates in (2E)-4-hydroxy-3-methylbut-2-enyl diphosphate binding. C198 is a binding site for [4Fe-4S] cluster. Residues S226, S227, N228, and S270 each contribute to the (2E)-4-hydroxy-3-methylbut-2-enyl diphosphate site. Dimethylallyl diphosphate-binding residues include S226, S227, N228, and S270. Residues S226, S227, N228, and S270 each contribute to the isopentenyl diphosphate site.

Belongs to the IspH family. Requires [4Fe-4S] cluster as cofactor.

The enzyme catalyses isopentenyl diphosphate + 2 oxidized [2Fe-2S]-[ferredoxin] + H2O = (2E)-4-hydroxy-3-methylbut-2-enyl diphosphate + 2 reduced [2Fe-2S]-[ferredoxin] + 2 H(+). It carries out the reaction dimethylallyl diphosphate + 2 oxidized [2Fe-2S]-[ferredoxin] + H2O = (2E)-4-hydroxy-3-methylbut-2-enyl diphosphate + 2 reduced [2Fe-2S]-[ferredoxin] + 2 H(+). The protein operates within isoprenoid biosynthesis; dimethylallyl diphosphate biosynthesis; dimethylallyl diphosphate from (2E)-4-hydroxy-3-methylbutenyl diphosphate: step 1/1. It participates in isoprenoid biosynthesis; isopentenyl diphosphate biosynthesis via DXP pathway; isopentenyl diphosphate from 1-deoxy-D-xylulose 5-phosphate: step 6/6. Its function is as follows. Catalyzes the conversion of 1-hydroxy-2-methyl-2-(E)-butenyl 4-diphosphate (HMBPP) into a mixture of isopentenyl diphosphate (IPP) and dimethylallyl diphosphate (DMAPP). Acts in the terminal step of the DOXP/MEP pathway for isoprenoid precursor biosynthesis. The protein is 4-hydroxy-3-methylbut-2-enyl diphosphate reductase of Acinetobacter baylyi (strain ATCC 33305 / BD413 / ADP1).